Here is a 73-residue protein sequence, read N- to C-terminus: Alpha-amylase inhibitor Paim-1 (73 aa).

2 disulfide bridges follow: cysteine 8-cysteine 24 and cysteine 42-cysteine 70.

In terms of biological role, inhibits mammalian alpha-amylases specifically but has no action on plant and microbial alpha-amylases. The polypeptide is Alpha-amylase inhibitor Paim-1 (Streptomyces olivaceoviridis (Streptomyces corchorusii)).